The chain runs to 79 residues: Conotoxin TxMEKL-021 (79 aa).

The signal sequence occupies residues 1 to 19 (MEKLTILLLVAVVLMSTQA). A propeptide spanning residues 20-47 (LPQGGGEKRPRENIRFLSKRKSNAERWR) is cleaved from the precursor. Cystine bridges form between cysteine 51–cysteine 65, cysteine 58–cysteine 69, and cysteine 64–cysteine 75.

This sequence belongs to the conotoxin O2 superfamily. In terms of tissue distribution, expressed by the venom duct.

It is found in the secreted. This Conus textile (Cloth-of-gold cone) protein is Conotoxin TxMEKL-021.